We begin with the raw amino-acid sequence, 635 residues long: Threonine--tRNA ligase (635 aa).

Residues 1–62 enclose the TGS domain; sequence MITITLPDGS…EHDAILRIIT (62 aa). The catalytic stretch occupies residues 244-535; sequence DHRKIGKAQD…LIEHYAGIWP (292 aa). 3 residues coordinate Zn(2+): C335, H386, and H512.

This sequence belongs to the class-II aminoacyl-tRNA synthetase family. As to quaternary structure, homodimer. It depends on Zn(2+) as a cofactor.

The protein resides in the cytoplasm. The enzyme catalyses tRNA(Thr) + L-threonine + ATP = L-threonyl-tRNA(Thr) + AMP + diphosphate + H(+). Catalyzes the attachment of threonine to tRNA(Thr) in a two-step reaction: L-threonine is first activated by ATP to form Thr-AMP and then transferred to the acceptor end of tRNA(Thr). Also edits incorrectly charged L-seryl-tRNA(Thr). The chain is Threonine--tRNA ligase from Xylella fastidiosa (strain M12).